A 177-amino-acid polypeptide reads, in one-letter code: Ribulose bisphosphate carboxylase small subunit, chloroplastic 4 (177 aa).

Residues 1-56 constitute a chloroplast transit peptide; sequence MASSMMASTAAAVARAGPAQTNMVPFNACRSSVPFPATRKANNDLSTLPSNGGRVS.

This sequence belongs to the RuBisCO small chain family. As to quaternary structure, heterohexadecamer of 8 large and 8 small subunits.

The protein localises to the plastid. The protein resides in the chloroplast. In terms of biological role, ruBisCO catalyzes two reactions: the carboxylation of D-ribulose 1,5-bisphosphate, the primary event in carbon dioxide fixation, as well as the oxidative fragmentation of the pentose substrate. Both reactions occur simultaneously and in competition at the same active site. Although the small subunit is not catalytic it is essential for maximal activity. This Lemna gibba (Swollen duckweed) protein is Ribulose bisphosphate carboxylase small subunit, chloroplastic 4.